We begin with the raw amino-acid sequence, 180 residues long: Probable macrolide acetyltransferase (180 aa).

The protein belongs to the transferase hexapeptide repeat family.

This chain is Probable macrolide acetyltransferase, found in Lysinibacillus sphaericus (Bacillus sphaericus).